We begin with the raw amino-acid sequence, 175 residues long: Ribosome maturation factor RimM (175 aa).

The region spanning 99–172 is the PRC barrel domain; the sequence is SIEFTWEHFI…KLTMIIPDGL (74 aa).

It belongs to the RimM family. As to quaternary structure, binds ribosomal protein uS19.

It localises to the cytoplasm. Its function is as follows. An accessory protein needed during the final step in the assembly of 30S ribosomal subunit, possibly for assembly of the head region. Essential for efficient processing of 16S rRNA. May be needed both before and after RbfA during the maturation of 16S rRNA. It has affinity for free ribosomal 30S subunits but not for 70S ribosomes. The protein is Ribosome maturation factor RimM of Porphyromonas gingivalis (strain ATCC BAA-308 / W83).